The following is a 699-amino-acid chain: Protein phosphatase 1 regulatory subunit 37 (699 aa).

Residues 1–12 (MEIPPQEAPPGP) show a composition bias toward pro residues. Residues 1–42 (MEIPPQEAPPGPGADGEAEEAPVEAPSPGPASPPADGRLKAA) are disordered. Residues Ser50 and Ser56 each carry the phosphoserine modification. 5 LRR repeats span residues 220-240 (SLAV…MLLA), 248-269 (TLRE…AQLG), 277-297 (SLQI…AYIC), 306-326 (GLAT…AFLG), and 334-354 (SLET…RNLK). The segment at 467 to 667 (RLQLSASMPE…PPGPEAKVGS (201 aa)) is disordered. Over residues 510–525 (SDSDSDSEGEDRDEAD) the composition is skewed to acidic residues. The residue at position 566 (Ser566) is a Phosphoserine. Pro residues-rich tracts occupy residues 588–613 (PPVP…PFPT) and 622–642 (DPGP…PPLP).

It belongs to the PPP1R37 family. In terms of assembly, interacts with PPP1CA.

Its function is as follows. Inhibits phosphatase activity of protein phosphatase 1 (PP1) complexes. The protein is Protein phosphatase 1 regulatory subunit 37 (PPP1R37) of Bos taurus (Bovine).